Here is a 145-residue protein sequence, read N- to C-terminus: Class I hydrophobin 1 (145 aa).

The N-terminal stretch at 1–19 (MKFSYAIAAVVAAAASVQA) is a signal peptide. 4 cysteine pairs are disulfide-bonded: Cys-65–Cys-126, Cys-72–Cys-120, Cys-73–Cys-106, and Cys-127–Cys-140. Residues Asn-80 and Asn-129 are each glycosylated (N-linked (GlcNAc...) asparagine).

It belongs to the fungal hydrophobin family. In terms of assembly, self-assembles to form functional amyloid fibrils called rodlets. Self-assembly into fibrillar rodlets occurs spontaneously at hydrophobic:hydrophilic interfaces and the rodlets further associate laterally to form amphipathic monolayers.

The protein resides in the secreted. It localises to the cell wall. Its function is as follows. Aerial growth, conidiation, and dispersal of filamentous fungi in the environment rely upon a capability of their secreting small amphipathic proteins called hydrophobins (HPBs) with low sequence identity. Class I can self-assemble into an outermost layer of rodlet bundles on aerial cell surfaces, conferring cellular hydrophobicity that supports fungal growth, development and dispersal; whereas Class II form highly ordered films at water-air interfaces through intermolecular interactions but contribute nothing to the rodlet structure. Hyd1 is a class I hydrophobin that is crucial for the initiation of primordia formation. Plays also important roles in nitrogen regulation and resistance to abiotic stresses. The protein is Class I hydrophobin 1 of Ganoderma lucidum (Ling zhi medicinal fungus).